The sequence spans 305 residues: 3-methyl-2-oxobutanoate hydroxymethyltransferase (305 aa).

Mg(2+)-binding residues include D52 and D95. 3-methyl-2-oxobutanoate-binding positions include 52-53 (DS), D95, and K125. A Mg(2+)-binding site is contributed by E127. The active-site Proton acceptor is E194.

It belongs to the PanB family. Homodecamer; pentamer of dimers. Mg(2+) serves as cofactor.

Its subcellular location is the cytoplasm. It catalyses the reaction 3-methyl-2-oxobutanoate + (6R)-5,10-methylene-5,6,7,8-tetrahydrofolate + H2O = 2-dehydropantoate + (6S)-5,6,7,8-tetrahydrofolate. The protein operates within cofactor biosynthesis; (R)-pantothenate biosynthesis; (R)-pantoate from 3-methyl-2-oxobutanoate: step 1/2. Catalyzes the reversible reaction in which hydroxymethyl group from 5,10-methylenetetrahydrofolate is transferred onto alpha-ketoisovalerate to form ketopantoate. The protein is 3-methyl-2-oxobutanoate hydroxymethyltransferase of Anaeromyxobacter sp. (strain Fw109-5).